The sequence spans 400 residues: MHISKINFNYQARAIYSANPQTSRGRLFYETMSTIRSPFQRDRDRIIHSNAFRRLKHKTQVFIADESDHYRTRLTHSIEVSQIARTLARALCLDEDLAEAIALAHDFGHTPFGHAGEDALNEAMAHYGGFDHNAQALRIVTKLEQRYANFDGLNLTWETLEGLVKHNGPLLGPYANNKDVPIDILQYNTKQDLKLNCFAGLEAQCAAIADDIAYNAHDIDDGLRSQFLTLGQFEQVSLTAVLLKDIEKEHPQLDKTRRGYELVRRQITTMVEDVIKQSQENLAHIKPTSISDVQQAEQTIVTFSPTMAVYEKELKNFLFKNLYYHDQVLSRRNAAKCIVQKLFDCYYKNPNVMPESWHSKTAHLTNQELARLIADFLSGMTDHYALREYQRLFDCTNNFV.

An HD domain is found at 73 to 215 (RLTHSIEVSQ…AAIADDIAYN (143 aa)).

This sequence belongs to the dGTPase family. Type 2 subfamily.

This is Deoxyguanosinetriphosphate triphosphohydrolase-like protein from Bartonella quintana (strain Toulouse) (Rochalimaea quintana).